We begin with the raw amino-acid sequence, 199 residues long: Recombination protein RecR (199 aa).

The C4-type zinc-finger motif lies at 57–72 (CSVCGNITEDDPCPIC). The 97-residue stretch at 80 to 176 (SRVLVVERSR…KVTRLAHGLS (97 aa)) folds into the Toprim domain.

It belongs to the RecR family.

Its function is as follows. May play a role in DNA repair. It seems to be involved in an RecBC-independent recombinational process of DNA repair. It may act with RecF and RecO. The sequence is that of Recombination protein RecR from Limosilactobacillus fermentum (strain NBRC 3956 / LMG 18251) (Lactobacillus fermentum).